Reading from the N-terminus, the 612-residue chain is Sulfite reductase [NADPH] hemoprotein beta-component (612 aa).

The segment at 1 to 26 (MDDHKPIETPDGPAVDTPGIGARRYE) is disordered. Cys469, Cys475, Cys514, and Cys518 together coordinate [4Fe-4S] cluster. Cys518 lines the siroheme pocket.

This sequence belongs to the nitrite and sulfite reductase 4Fe-4S domain family. As to quaternary structure, alpha(8)-beta(8). The alpha component is a flavoprotein, the beta component is a hemoprotein. Siroheme is required as a cofactor. The cofactor is [4Fe-4S] cluster.

It carries out the reaction hydrogen sulfide + 3 NADP(+) + 3 H2O = sulfite + 3 NADPH + 4 H(+). Its pathway is sulfur metabolism; hydrogen sulfide biosynthesis; hydrogen sulfide from sulfite (NADPH route): step 1/1. Component of the sulfite reductase complex that catalyzes the 6-electron reduction of sulfite to sulfide. This is one of several activities required for the biosynthesis of L-cysteine from sulfate. The chain is Sulfite reductase [NADPH] hemoprotein beta-component from Methylorubrum extorquens (strain PA1) (Methylobacterium extorquens).